Here is a 929-residue protein sequence, read N- to C-terminus: Type I restriction enzyme SauCOLORF180P endonuclease subunit (929 aa).

The Helicase ATP-binding domain maps to 254 to 418 (QQATETGNNG…DGRTTADIFG (165 aa)). Residue 268–274 (TTGSGKT) participates in ATP binding.

This sequence belongs to the HsdR family. In terms of assembly, the type I restriction/modification system is composed of three polypeptides R, M and S.

The catalysed reaction is Endonucleolytic cleavage of DNA to give random double-stranded fragments with terminal 5'-phosphates, ATP is simultaneously hydrolyzed.. Functionally, the restriction (R) subunit of a type I restriction enzyme that recognizes an undetermined sequence and cleaves a random distance away. Subunit R is required for both nuclease and ATPase activities, but not for modification. After locating a non-methylated recognition site, the enzyme complex serves as a molecular motor that translocates DNA in an ATP-dependent manner until a collision occurs that triggers cleavage. This chain is Type I restriction enzyme SauCOLORF180P endonuclease subunit, found in Staphylococcus aureus (strain COL).